The sequence spans 307 residues: MSQIIDVPETLSLAIDSFLSYIEVERRLSPVTVENYQRQLMTIAQMMVAIKINQWSLLESQHVRMLLAKSHRSGLQPASLALRFSALRSFLDWQVSQGMLAVNPAKGVRTPKSGRHLPKNMDVDEVSQLMNIDLKDPLSVRDRTMLEVMYGAGLRLSELTNLNINDIDLQEGEVRVLGKGSKERKVPLGRKAVEWLQHWFAMRELYSPEDTAVFISTKSGKRLSVRSVQKRFELWGVKQGLSSHVNPHKLRHSFATHLLESSGDLRAVQELLGHANLSTTQVYTHLDFQHLAKVYDAAHPRAKREKS.

One can recognise a Core-binding (CB) domain in the interval 9–95 (ETLSLAIDSF…ALRSFLDWQV (87 aa)). The 181-residue stretch at 116–296 (HLPKNMDVDE…DFQHLAKVYD (181 aa)) folds into the Tyr recombinase domain. Active-site residues include Arg155, Lys179, His248, Arg251, and His274. The O-(3'-phospho-DNA)-tyrosine intermediate role is filled by Tyr283.

This sequence belongs to the 'phage' integrase family. XerC subfamily. In terms of assembly, forms a cyclic heterotetrameric complex composed of two molecules of XerC and two molecules of XerD, in which XerC interacts with XerD via its C-terminal region, XerD interacts with XerC via its C-terminal region and so on.

Its subcellular location is the cytoplasm. Its activity is regulated as follows. FtsK may regulate the catalytic switch between XerC and XerD in the heterotetrameric complex during the two steps of the recombination process. Site-specific tyrosine recombinase, which acts by catalyzing the cutting and rejoining of the recombining DNA molecules. Binds cooperatively to specific DNA consensus sequences that are separated from XerD binding sites by a short central region, forming the heterotetrameric XerC-XerD complex that recombines DNA substrates. The complex is essential to convert dimers of the bacterial chromosome into monomers to permit their segregation at cell division. It also contributes to the segregational stability of plasmids. In the complex XerC specifically exchanges the top DNA strands. This Proteus mirabilis protein is Tyrosine recombinase XerC.